The sequence spans 375 residues: S-adenosylmethionine:tRNA ribosyltransferase-isomerase (375 aa).

The protein belongs to the QueA family. As to quaternary structure, monomer.

The protein localises to the cytoplasm. The catalysed reaction is 7-aminomethyl-7-carbaguanosine(34) in tRNA + S-adenosyl-L-methionine = epoxyqueuosine(34) in tRNA + adenine + L-methionine + 2 H(+). Its pathway is tRNA modification; tRNA-queuosine biosynthesis. Transfers and isomerizes the ribose moiety from AdoMet to the 7-aminomethyl group of 7-deazaguanine (preQ1-tRNA) to give epoxyqueuosine (oQ-tRNA). The sequence is that of S-adenosylmethionine:tRNA ribosyltransferase-isomerase from Rickettsia typhi (strain ATCC VR-144 / Wilmington).